The chain runs to 250 residues: MDTAMQLKTSIGLITCRMNTQNNQIETILVQKRYSLAFSEFIHCHYSINANQGHLIKMFNNMTINERLLVKTLDFDRMWYHIWIETPVYELYHKKYQKFRKNWLLPDNGKKLISLINQAKGSGTLLWEIPKGKPKEDESDLTCAIREFEEETGITREYYQILPEFKKSMSYFDGKTEYKHIYFLAMLCKSLEEPNMNLSLQYENRIAEISKISWQNMEAVRFISKRQSFNLEPMIGPAFNFIKNYLRYKH.

In terms of domain architecture, Nudix hydrolase spans 97–239; sequence QKFRKNWLLP…NLEPMIGPAF (143 aa). The short motif at 132–153 is the Nudix box element; the sequence is GKPKEDESDLTCAIREFEEETG. E138 is a binding site for Mg(2+). The Nucleophile role is filled by E147. Mg(2+) contacts are provided by E151 and D173.

Belongs to the Nudix hydrolase family. DIPP subfamily. Interacts with host RPL23A. The cofactor is Mg(2+). Mn(2+) is required as a cofactor.

The protein localises to the host rough endoplasmic reticulum. It carries out the reaction diphospho-myo-inositol polyphosphate + H2O = myo-inositol polyphosphate + phosphate.. Functionally, decapping enzyme required for the removal of the 5'-end m7GpppN cap tethered to viral and host mRNAs to allow their decay in cells. May therefore accelerate viral and cellular mRNA turnover to eliminate competing host mRNAs and allow stage-specific synthesis of viral proteins. Acceleration of the turnover of cellular transcripts may even promote the shutoff of host protein synthesis. In addition to the mRNA cap, g5R also efficiently hydrolyzes diphosphoinositol polyphosphates. Down-regulation of the level of PP-InsP5 (diphosphoinositol pentakisphosphate) may play a role in viral manipulation of the cellular secretory pathway, a step necessary for the formation of virions. Binds viral and cellular poly(A) mRNAs, thereby decreasing both types of mRNAs. The polypeptide is mRNA-decapping protein g5R (Ornithodoros (relapsing fever ticks)).